A 967-amino-acid chain; its full sequence is Leucine--tRNA ligase (967 aa).

The short motif at 43–53 (PYLSGHLHVGH) is the 'HIGH' region element. The 'KMSKS' region signature appears at 650 to 654 (KMSKS). An ATP-binding site is contributed by Lys653.

It belongs to the class-I aminoacyl-tRNA synthetase family.

It is found in the cytoplasm. It catalyses the reaction tRNA(Leu) + L-leucine + ATP = L-leucyl-tRNA(Leu) + AMP + diphosphate. In Thermococcus kodakarensis (strain ATCC BAA-918 / JCM 12380 / KOD1) (Pyrococcus kodakaraensis (strain KOD1)), this protein is Leucine--tRNA ligase.